The primary structure comprises 267 residues: Exosome complex component Rrp42 (267 aa).

Belongs to the RNase PH family. Rrp42 subfamily. In terms of assembly, component of the archaeal exosome complex. Forms a hexameric ring-like arrangement composed of 3 Rrp41-Rrp42 heterodimers. The hexameric ring associates with a trimer of Rrp4 and/or Csl4 subunits.

It localises to the cytoplasm. Non-catalytic component of the exosome, which is a complex involved in RNA degradation. Contributes to the structuring of the Rrp41 active site. The sequence is that of Exosome complex component Rrp42 from Methanopyrus kandleri (strain AV19 / DSM 6324 / JCM 9639 / NBRC 100938).